We begin with the raw amino-acid sequence, 188 residues long: MPVADTSQLISGVAERYASSLFELALEAGSVEAVGADLDRVQALIDGSEDLKRLVVSPVFSADDQFKAISALVEKFGFSGLVGNFLKVVARNRRLFALPGSIKAFRLIAARHRGEITADVTSAHALTAAQETELKATLKGVTGKDVAVNVTVDPSILGGLIVKVGSRQIDTSLRTKLSTLKLALKEVG.

Belongs to the ATPase delta chain family. As to quaternary structure, F-type ATPases have 2 components, F(1) - the catalytic core - and F(0) - the membrane proton channel. F(1) has five subunits: alpha(3), beta(3), gamma(1), delta(1), epsilon(1). F(0) has three main subunits: a(1), b(2) and c(10-14). The alpha and beta chains form an alternating ring which encloses part of the gamma chain. F(1) is attached to F(0) by a central stalk formed by the gamma and epsilon chains, while a peripheral stalk is formed by the delta and b chains.

Its subcellular location is the cell inner membrane. Its function is as follows. F(1)F(0) ATP synthase produces ATP from ADP in the presence of a proton or sodium gradient. F-type ATPases consist of two structural domains, F(1) containing the extramembraneous catalytic core and F(0) containing the membrane proton channel, linked together by a central stalk and a peripheral stalk. During catalysis, ATP synthesis in the catalytic domain of F(1) is coupled via a rotary mechanism of the central stalk subunits to proton translocation. Functionally, this protein is part of the stalk that links CF(0) to CF(1). It either transmits conformational changes from CF(0) to CF(1) or is implicated in proton conduction. The sequence is that of ATP synthase subunit delta from Sinorhizobium fredii (strain NBRC 101917 / NGR234).